Here is a 463-residue protein sequence, read N- to C-terminus: SPARC-related modular calcium-binding protein 1 (463 aa).

A signal peptide spans 1–25 (MLPARVRLLTPHLLLVLVQLSPAGG). The Kazal-like domain maps to 36–88 (SDRDPPCNPHCPRTQPKPICASDGRSYESMCEYQRAKCRDPALAVVHRGRCKD). 6 disulfides stabilise this stretch: Cys-42-Cys-73, Cys-46-Cys-66, Cys-55-Cys-86, Cys-94-Cys-117, Cys-128-Cys-135, and Cys-137-Cys-157. Residues 91 to 157 (QSKCRLERAQ…SSVQNKTPVC (67 aa)) form the Thyroglobulin type-1 1 domain. Asn-224 carries N-linked (GlcNAc...) asparagine glycosylation. The Thyroglobulin type-1 2 domain occupies 234–302 (VHSCDQERQS…TSTRYVMPSC (69 aa)). 3 disulfides stabilise this stretch: Cys-237–Cys-261, Cys-272–Cys-279, and Cys-281–Cys-302. 2 EF-hand domains span residues 369-404 (LEER…VKKK) and 406-441 (KPKK…SKEG). Ca(2+)-binding residues include Asp-382, Asn-384, Ser-386, Asp-388, Glu-393, Asp-419, Asn-421, Asp-423, and Glu-430. N-linked (GlcNAc...) asparagine glycosylation occurs at Asn-384.

Glycosylated. Widely expressed in many tissues with a strongest signal in ovary.

The protein resides in the secreted. It localises to the extracellular space. The protein localises to the extracellular matrix. It is found in the basement membrane. Its function is as follows. Probable regulator of osteoblast differentiation. Plays essential roles in both eye and limb development. This chain is SPARC-related modular calcium-binding protein 1 (Smoc1), found in Mus musculus (Mouse).